We begin with the raw amino-acid sequence, 364 residues long: MQFFCVNLYRSVLNLLEERMKTEMIEEMVIVGGLVMVQFVYAGNSLLMSYLMSLGLGPFTIVIFSTFATFIILSPFAILFERKQWPNELSLRLIGKLVLISFAGVTLFQSLFLEGIRLTSPAMATAMPNLAPGLIFFIAWIVGLEKMNLKCVYSKLKILGTLLCVFGALAMSVMHSTSISHKEEDDTPIFVFDRDKVVGCIYLLGAVFVLSTNVVLQASTLAEFPAPISLSAITALLGVLITTVVLLLQNRKTKVLASSLISFGNLVGYSVLAGAVSGACVSFNGWAMKKRGPVFVSMFSPFATVISVAFAVLTLGESVSLGSVGGMVLMFVGLYLVLWAKGKEGFSEIESFESEFDSKKPLLS.

The next 10 membrane-spanning stretches (helical) occupy residues 28 to 48, 59 to 79, 93 to 113, 124 to 144, 158 to 178, 197 to 217, 228 to 248, 255 to 275, 293 to 313, and 319 to 339; these read MVIV…SLLM, FTIV…FAIL, LIGK…SLFL, ATAM…IVGL, ILGT…HSTS, VVGC…VVLQ, ISLS…VLLL, VLAS…LAGA, PVFV…FAVL, and VSLG…LVLW. Residues 40 to 172 enclose the EamA 1 domain; sequence VYAGNSLLMS…LCVFGALAMS (133 aa). Residues 219–338 enclose the EamA 2 domain; the sequence is STLAEFPAPI…LMFVGLYLVL (120 aa).

It belongs to the drug/metabolite transporter (DMT) superfamily. Plant drug/metabolite exporter (P-DME) (TC 2.A.7.4) family.

The protein localises to the membrane. In Arabidopsis thaliana (Mouse-ear cress), this protein is WAT1-related protein At5g47470.